Here is a 230-residue protein sequence, read N- to C-terminus: Orotidine 5'-phosphate decarboxylase (230 aa).

Substrate-binding positions include D11, K34, 61 to 70 (DLKLHDIPNT), T117, R179, Q188, G208, and R209. K63 (proton donor) is an active-site residue.

The protein belongs to the OMP decarboxylase family. Type 1 subfamily. Homodimer.

It carries out the reaction orotidine 5'-phosphate + H(+) = UMP + CO2. It participates in pyrimidine metabolism; UMP biosynthesis via de novo pathway; UMP from orotate: step 2/2. Functionally, catalyzes the decarboxylation of orotidine 5'-monophosphate (OMP) to uridine 5'-monophosphate (UMP). The chain is Orotidine 5'-phosphate decarboxylase from Streptococcus mutans serotype c (strain ATCC 700610 / UA159).